The chain runs to 301 residues: ADP-ribosyl cyclase/cyclic ADP-ribose hydrolase 1 (301 aa).

Over 1-21 (MANCEFSPVSGDKPCCRLSRR) the chain is Cytoplasmic. Residues 22–43 (AQVCLGVCLLVLLILVVVVAVV) form a helical; Signal-anchor for type II membrane protein membrane-spanning segment. The Extracellular segment spans residues 44-301 (LPRWRQQWSG…PEDSSCLSGI (258 aa)). 3 cysteine pairs are disulfide-bonded: cysteine 68-cysteine 83, cysteine 100-cysteine 181, and cysteine 161-cysteine 174. A glycan (N-linked (GlcNAc...) asparagine) is linked at asparagine 101. The active site involves cysteine 120. Asparagine 121 is a glycosylation site (N-linked (GlcNAc...) asparagine). Cysteine 202 is an active-site residue. 2 N-linked (GlcNAc...) asparagine glycosylation sites follow: asparagine 210 and asparagine 220. Cystine bridges form between cysteine 255/cysteine 276 and cysteine 288/cysteine 297.

Belongs to the ADP-ribosyl cyclase family. Homodimer.

The protein resides in the cell surface. Its subcellular location is the membrane. It catalyses the reaction NAD(+) = cyclic ADP-beta-D-ribose + nicotinamide + H(+). The enzyme catalyses 2'-phospho-cyclic ADP-ribose + nicotinate = nicotinate-adenine dinucleotide phosphate. The catalysed reaction is NAD(+) + H2O = ADP-D-ribose + nicotinamide + H(+). It carries out the reaction nicotinate + NADP(+) = nicotinate-adenine dinucleotide phosphate + nicotinamide. Its activity is regulated as follows. ATP inhibits the cADPR hydrolyzing activity. Functionally, synthesizes cyclic ADP-ribose (cADPR), a second messenger for glucose-induced insulin secretion. Synthesizes the Ca(2+) mobilizer nicotinate-adenine dinucleotide phosphate, NAADP(+), from 2'-phospho-cADPR and nicotinic acid, as well as from NADP(+) and nicotinic acid. Also has cADPR hydrolase activity. In Macaca fascicularis (Crab-eating macaque), this protein is ADP-ribosyl cyclase/cyclic ADP-ribose hydrolase 1 (CD38).